Reading from the N-terminus, the 837-residue chain is Enterin neuropeptides (837 aa).

Positions 1-25 (MAKHDVTVMTLLLVVCALHVFDAQG) are cleaved as a signal peptide. Residues 26–47 (TDVKLNDGFLRSGIMNIPFQRR) constitute a propeptide that is removed on maturation. Position 57 is a valine amide (valine 57). Residues 61 to 134 (SGFQSPVSPS…ENKRFSKENE (74 aa)) constitute a propeptide that is removed on maturation. Valine 146 bears the Valine amide mark. A propeptide spanning residues 150-178 (MDLSALEKELIAKLKAADLLSPLETEAPG) is cleaved from the precursor. Leucine 190 carries the post-translational modification Leucine amide. The propeptide occupies 194–201 (MPVDVFPR). A Valine amide modification is found at valine 211. Residues 215 to 234 (SGNGENYFDDLDTFGDISQR) constitute a propeptide that is removed on maturation. The residue at position 244 (valine 244) is a Valine amide. The propeptide occupies 248–266 (GNTDFSRNPLARLSQVQNR). Position 276 is a valine amide (valine 276). A propeptide spanning residues 280–285 (SVHNIV) is cleaved from the precursor. At valine 297 the chain carries Valine amide. Positions 301–325 (DFEDASEGLDEEEGDIDGYSDDLDV) are excised as a propeptide. A valine amide mark is found at valine 336, valine 348, valine 360, valine 372, valine 384, valine 396, valine 408, valine 420, valine 432, valine 444, valine 456, valine 468, valine 480, valine 492, valine 504, valine 516, valine 528, and valine 540. A propeptide spanning residues 544-595 (ELGEDEINFLKEVDAADISRQLAEEDEKEAMVSVDDKETLSNEEDASEDDFE) is cleaved from the precursor. The tract at residues 567–594 (EEDEKEAMVSVDDKETLSNEEDASEDDF) is disordered. The span at 584–593 (SNEEDASEDD) shows a compositional bias: acidic residues. Glutamate 598 carries the post-translational modification Pyrrolidone carboxylic acid (Glu); in form ENl'. Valine 606 is subject to Valine amide. Positions 610–627 (DEEGDMGVEMEEEMESEK) are excised as a propeptide. Leucine 637 bears the Leucine amide mark. Glutamine 641 is modified (pyrrolidone carboxylic acid). Valine 649 is subject to Valine amide. Position 653 is a pyrrolidone carboxylic acid (glutamine 653). Valine 661 and valine 673 each carry valine amide. Glutamine 677 carries the post-translational modification Pyrrolidone carboxylic acid. A valine amide mark is found at valine 685 and valine 697. At glutamine 701 the chain carries Pyrrolidone carboxylic acid. Position 709 is a valine amide (valine 709). Position 713 is a pyrrolidone carboxylic acid (glutamine 713). Valine 721 is modified (valine amide). The residue at position 725 (glutamine 725) is a Pyrrolidone carboxylic acid. Valine 733 is subject to Valine amide. Positions 734–837 (GKRSGAEDID…DSHIMATSST (104 aa)) are excised as a propeptide. The disordered stretch occupies residues 772–837 (GQPAAANEEE…DSHIMATSST (66 aa)). Acidic residues predominate over residues 778–791 (NEEELQQEAAEESE).

As to expression, high expression in gut and CNS.

The protein resides in the secreted. Its function is as follows. Reduce interneurons B4/5 activity. May play a regulatory role in nonfeeding behaviors. The protein is Enterin neuropeptides (ENPP) of Aplysia californica (California sea hare).